Reading from the N-terminus, the 434-residue chain is MEKMESTEEWEALLSSSSNGDELTMKLIRNGLAKGFKSQKAAGDAGLYSRFLPYHFTESVSNDSFSSLPWQIFANSVAGNSPLQNEAWAFLMDNEDFFLPVPMNPAQCTALEIALWSLIRVDDQRLFELCHSKSGIRLLSIIFDFDSHPDWLREDVMFNIAERILKSNFPNVLVNVASKIGPKSIYFLIDCMSHKIKLKETATGFYVILDVLSCVGRQFASVLEECFTKEISSAGLDHINHFSEIVMLGVDLLYRDYVSYDTTISLKNDDSSSLGDMEFETSQPSSSISEIIHLLAVLDKRIPKKTLVEKTYASSMELQELYNAVVGVKRECVRFIAFICSKFSTAPDLVRHFNGVALIISQANYDDWNPYIREISVLCTRLLLQNNIENQKIIGGLTPITTTHSDALEEAGFTSYINDKGKVVLQPKTAKNSH.

It belongs to the ataxin-10 family.

It is found in the cytoplasm. The protein localises to the nucleus. May play a role in the regulation of cytokinesis. The chain is Ataxin-10 homolog (mug160) from Schizosaccharomyces pombe (strain 972 / ATCC 24843) (Fission yeast).